Reading from the N-terminus, the 263-residue chain is MWELRSASFWRAIFAEFFATLFYVFFGLGSSLRWAPGPLHVLQVALAFGLALATLVQTVGHISGAHVNPAVTFAFLVGSQMSLLRAFCYIAAQLLGAVAGAAVLYSVTPPAVRGNLALNTLHAGVSVGQATTVEIFLTLQFVLCIFATYDERRNGRMGSVALAVGFSLTLGHLFGMYYTGAGMNPARSFAPAILTRNFSNHWVYWVGPIIGGGLGSLLYDFLLFPRLKSVSERLSILKGARPSDSNGQPEGTGEPVELKTQAL.

The Cytoplasmic segment spans residues 1 to 9 (MWELRSASF). The chain crosses the membrane as a helical span at residues 10 to 29 (WRAIFAEFFATLFYVFFGLG). At 30–41 (SSLRWAPGPLHV) the chain is on the extracellular side. A helical transmembrane segment spans residues 42 to 59 (LQVALAFGLALATLVQTV). Topologically, residues 60–61 (GH) are cytoplasmic. Residues 62–77 (ISGAHVNPAVTFAFLV) constitute an intramembrane region (discontinuously helical). Positions 68–70 (NPA) match the NPA 1 motif. The Cytoplasmic segment spans residues 78–82 (GSQMS). The helical transmembrane segment at 83-106 (LLRAFCYIAAQLLGAVAGAAVLYS) threads the bilayer. Residues 107–127 (VTPPAVRGNLALNTLHAGVSV) are Extracellular-facing. The chain crosses the membrane as a helical span at residues 128 to 148 (GQATTVEIFLTLQFVLCIFAT). At 149–156 (YDERRNGR) the chain is on the cytoplasmic side. The helical transmembrane segment at 157–175 (MGSVALAVGFSLTLGHLFG) threads the bilayer. The Extracellular segment spans residues 176-178 (MYY). The discontinuously helical intramembrane region spans 179–193 (TGAGMNPARSFAPAI). The NPA 2 motif lies at 184 to 186 (NPA). The Extracellular segment spans residues 194–200 (LTRNFSN). A helical transmembrane segment spans residues 201-222 (HWVYWVGPIIGGGLGSLLYDFL). Residues 223 to 263 (LFPRLKSVSERLSILKGARPSDSNGQPEGTGEPVELKTQAL) are Cytoplasmic-facing. The segment at 227–237 (LKSVSERLSIL) is interaction with CALM. Ser-235, Ser-243, and Ser-245 each carry phosphoserine. Residues 240–263 (ARPSDSNGQPEGTGEPVELKTQAL) are disordered. Asn-246 is subject to Deamidated asparagine.

This sequence belongs to the MIP/aquaporin (TC 1.A.8) family. Homotetramer; each monomer provides an independent water pore. Two homotetramers on opposing membranes can dimerize, forming a cell-cell junction. Interacts with CALM; the calcium-calmodulin/CALM complex interacts with the cytoplasmic domains of two aquaporins, leading to channel closure. Interacts with BFSP1 (via C-terminus); prevents calcium-dependent inhibition of the water channel activity. Subject to partial proteolytic cleavage in the eye lens core. Partial proteolysis promotes interactions between tetramers from adjoining membranes. In terms of processing, fatty acylated at Met-1 and Lys-238. The acyl modifications, in decreasing order of ion abundance, are: oleoyl (C18:1) &gt; palmitoyl (C16:0) &gt; stearoyl (C18:0) &gt; eicosenoyl (C20:1) &gt; dihomo-gamma-linolenoyl (C20:3) &gt; palmitoleoyl (C16:1) &gt; eicosadienoyl (C20:2).

It localises to the cell membrane. Its subcellular location is the cell junction. The catalysed reaction is H2O(in) = H2O(out). Its activity is regulated as follows. The water channel activity is inhibited by calcium through calmodulin/CALM. In terms of biological role, aquaporins form homotetrameric transmembrane channels, with each monomer independently mediating water transport across the plasma membrane along its osmotic gradient. Specifically expressed in lens fiber cells, this aquaporin is crucial for maintaining lens water homeostasis and transparency. Beyond water permeability, it also acts as a cell-to-cell adhesion molecule, forming thin junctions between lens fiber cells that are essential for maintaining the ordered structure and transparency of the lens. This is Lens fiber major intrinsic protein from Rattus norvegicus (Rat).